The primary structure comprises 495 residues: PXA domain protein 1 (495 aa).

The PXA domain maps to 1 to 174; that stretch reads MAKLSSLLNP…KFIIYLSKAI (174 aa). Transmembrane regions (helical) follow at residues 7–27 and 235–255; these read LLNP…YSGI and WFFF…FVAE. 2 stretches are compositionally biased toward polar residues: residues 402–419 and 427–436; these read AVSS…QRSF and DSQTPSENSA. Residues 402-436 form a disordered region; that stretch reads AVSSPTKANTNKSHQRSFSIPKATKDSQTPSENSA. Residues 446-466 traverse the membrane as a helical segment; that stretch reads AYSQIPVIPFFLPSDKLIMLV.

Its subcellular location is the endosome membrane. Its function is as follows. Required for required for normal vacuolar morphology and for vacuolar protein transport. Also required for endosome-to-Golgi protein transport. The polypeptide is PXA domain protein 1 (pxa1) (Schizosaccharomyces pombe (strain 972 / ATCC 24843) (Fission yeast)).